Consider the following 124-residue polypeptide: Glycine cleavage system H protein (124 aa).

One can recognise a Lipoyl-binding domain in the interval 19 to 101 (VATVGITNHA…EGEGWLFKME (83 aa)). The residue at position 60 (Lys-60) is an N6-lipoyllysine.

It belongs to the GcvH family. In terms of assembly, the glycine cleavage system is composed of four proteins: P, T, L and H. (R)-lipoate is required as a cofactor.

Functionally, the glycine cleavage system catalyzes the degradation of glycine. The H protein shuttles the methylamine group of glycine from the P protein to the T protein. This chain is Glycine cleavage system H protein, found in Thermotoga maritima (strain ATCC 43589 / DSM 3109 / JCM 10099 / NBRC 100826 / MSB8).